Here is a 451-residue protein sequence, read N- to C-terminus: UPF0210 protein NMB1652 (451 aa).

This sequence belongs to the UPF0210 family. Homodimer.

The polypeptide is UPF0210 protein NMB1652 (Neisseria meningitidis serogroup B (strain ATCC BAA-335 / MC58)).